We begin with the raw amino-acid sequence, 205 residues long: NAD(P)H dehydrogenase (quinone) (205 aa).

The 192-residue stretch at 3-194 folds into the Flavodoxin-like domain; it reads VLVVYYSMYG…AAARYQGKHV (192 aa). Residues 9-14 and 82-84 each bind FMN; these read SMYGHI and TRF. Tyr-11 provides a ligand contact to NAD(+). Position 102 (Trp-102) interacts with substrate. An FMN-binding site is contributed by His-138.

The protein belongs to the WrbA family. The cofactor is FMN.

It carries out the reaction a quinone + NADH + H(+) = a quinol + NAD(+). The catalysed reaction is a quinone + NADPH + H(+) = a quinol + NADP(+). The chain is NAD(P)H dehydrogenase (quinone) from Geotalea daltonii (strain DSM 22248 / JCM 15807 / FRC-32) (Geobacter daltonii).